A 125-amino-acid chain; its full sequence is Interferon-induced transmembrane protein 1 (125 aa).

Over 1–36 the chain is Cytoplasmic; that stretch reads MHKEEHEVAVLGPPPSTILPRSTVINIHSETSVPDH. Serine 16 carries the phosphoserine modification. An intramembrane region (helical) is located at residues 37-57; sequence VVWSLFNTLFLNWCCLGFIAF. S-palmitoyl cysteine attachment occurs at residues cysteine 50, cysteine 51, and cysteine 84. Over 58–86 the chain is Cytoplasmic; that stretch reads AYSVKSRDRKMVGDVTGAQAYASTAKCLN. The segment at 84–125 is interaction with CAV1; the sequence is CLNIWALILGILMTIGFILLLVFGSVTVYHIMLQIIQEKRGY. A helical membrane pass occupies residues 87-107; sequence IWALILGILMTIGFILLLVFG. At 108–125 the chain is on the extracellular side; that stretch reads SVTVYHIMLQIIQEKRGY.

This sequence belongs to the CD225/Dispanin family. Interacts with CD81. Part of a complex composed of CD19, CR2/CD21, CD81 and IFITM1/CD225 in the membrane of mature B-cells. Interacts with CAV1; this interaction enhances the ability of CAV1 in inhibiting ERK activation. Post-translationally, palmitoylation on membrane-proximal cysteines controls clustering in membrane compartments and antiviral activity. As to expression, bone (at protein level). Levels greatly elevated in colon cancer, cervical cancer, esophageal cancer and ovarian cancer. Expressed in glioma cell lines.

It is found in the cell membrane. It localises to the lysosome membrane. In terms of biological role, IFN-induced antiviral protein which inhibits the entry of viruses to the host cell cytoplasm, permitting endocytosis, but preventing subsequent viral fusion and release of viral contents into the cytosol. Active against multiple viruses, including influenza A virus, SARS coronaviruses (SARS-CoV and SARS-CoV-2), Marburg virus (MARV), Ebola virus (EBOV), Dengue virus (DNV), West Nile virus (WNV), human immunodeficiency virus type 1 (HIV-1) and hepatitis C virus (HCV). Can inhibit: influenza virus hemagglutinin protein-mediated viral entry, MARV and EBOV GP1,2-mediated viral entry and SARS-CoV and SARS-CoV-2 S protein-mediated viral entry. Also implicated in cell adhesion and control of cell growth and migration. Inhibits SARS-CoV-2 S protein-mediated syncytia formation. Plays a key role in the antiproliferative action of IFN-gamma either by inhibiting the ERK activation or by arresting cell growth in G1 phase in a p53-dependent manner. Acts as a positive regulator of osteoblast differentiation. In hepatocytes, IFITM proteins act in a coordinated manner to restrict HCV infection by targeting the endocytosed HCV virion for lysosomal degradation. IFITM2 and IFITM3 display anti-HCV activity that may complement the anti-HCV activity of IFITM1 by inhibiting the late stages of HCV entry, possibly in a coordinated manner by trapping the virion in the endosomal pathway and targeting it for degradation at the lysosome. This is Interferon-induced transmembrane protein 1 from Homo sapiens (Human).